Consider the following 344-residue polypeptide: Phosphate acyltransferase (344 aa).

It belongs to the PlsX family. In terms of assembly, homodimer. Probably interacts with PlsY.

The protein localises to the cytoplasm. It catalyses the reaction a fatty acyl-[ACP] + phosphate = an acyl phosphate + holo-[ACP]. It functions in the pathway lipid metabolism; phospholipid metabolism. Catalyzes the reversible formation of acyl-phosphate (acyl-PO(4)) from acyl-[acyl-carrier-protein] (acyl-ACP). This enzyme utilizes acyl-ACP as fatty acyl donor, but not acyl-CoA. The sequence is that of Phosphate acyltransferase from Yersinia pestis bv. Antiqua (strain Antiqua).